The primary structure comprises 522 residues: Zinc finger and BTB domain-containing protein 18 (522 aa).

The BTB domain occupies 24 to 91 (CDCTVLVGDA…MYEGKLQFKD (68 aa)). Positions 121–143 (ATTEADSTKKEEDASSCSDKVES) are enriched in basic and acidic residues. Positions 121-165 (ATTEADSTKKEEDASSCSDKVESLSDGSSHMAGDLPSDEDEGEDE) are disordered. Position 157 is a phosphoserine (Ser157). Lys273 is covalently cross-linked (Glycyl lysine isopeptide (Lys-Gly) (interchain with G-Cter in SUMO2)). The interval 310–427 (EPAHLAPLRE…TFSCMYTLKR (118 aa)) is interaction with DNMT3A. 4 C2H2-type zinc fingers span residues 370-392 (FMCPLCNKVFPSPHILQIHLSTH), 410-432 (PTCSLCGKTFSCMYTLKRHERTH), 438-460 (YTCTQCGKSFQYSHNLSRHAVVH), and 466-489 (HACKWCERRFTQSGDLYRHIRKFH). Residues Ser516 and Ser517 each carry the phosphoserine modification.

The protein belongs to the krueppel C2H2-type zinc-finger protein family. ZBTB18 subfamily. In terms of assembly, interacts with DNMT3A.

Its subcellular location is the nucleus. Its function is as follows. Transcriptional repressor that plays a role in various developmental processes such as myogenesis and brain development. Specifically binds the consensus DNA sequence 5'-[AC]ACATCTG[GT][AC]-3' which contains the E box core, and acts by recruiting chromatin remodeling multiprotein complexes. Plays a key role in myogenesis by directly repressing the expression of ID2 and ID3, 2 inhibitors of skeletal myogenesis. Also involved in controlling cell division of progenitor cells and regulating the survival of postmitotic cortical neurons. May also play a role in the organization of chromosomes in the nucleus. The protein is Zinc finger and BTB domain-containing protein 18 (ZBTB18) of Bos taurus (Bovine).